Consider the following 227-residue polypeptide: 7-cyano-7-deazaguanine synthase (227 aa).

Leu7–Thr17 contacts ATP. Zn(2+) is bound by residues Cys187, Cys195, Cys198, and Cys201.

Belongs to the QueC family. Zn(2+) serves as cofactor.

It catalyses the reaction 7-carboxy-7-deazaguanine + NH4(+) + ATP = 7-cyano-7-deazaguanine + ADP + phosphate + H2O + H(+). Its pathway is purine metabolism; 7-cyano-7-deazaguanine biosynthesis. Functionally, catalyzes the ATP-dependent conversion of 7-carboxy-7-deazaguanine (CDG) to 7-cyano-7-deazaguanine (preQ(0)). This is 7-cyano-7-deazaguanine synthase from Chlorobium phaeovibrioides (strain DSM 265 / 1930) (Prosthecochloris vibrioformis (strain DSM 265)).